Consider the following 87-residue polypeptide: Kappa-6-bungarotoxin (87 aa).

An N-terminal signal peptide occupies residues Met1–Thr21. Intrachain disulfides connect Cys24–Cys42, Cys35–Cys63, Cys48–Cys52, Cys67–Cys79, and Cys80–Cys85.

This sequence belongs to the three-finger toxin family. Long-chain subfamily. Kappa-neurotoxin sub-subfamily. Homo- and heterodimer; non-covalently linked. In terms of tissue distribution, expressed by the venom gland.

It localises to the secreted. Its function is as follows. Postsynaptic neurotoxin that binds and inhibits neuronal nicotinic acetylcholine receptors (nAChR) with high affinity (IC(50)&lt;100 nM). Is a selective, and slowly reversible antagonist of alpha-3/CHRNA3-containing and some alpha-4/CHRNA4-containing AChRs. The protein is Kappa-6-bungarotoxin of Bungarus multicinctus (Many-banded krait).